Here is a 102-residue protein sequence, read N- to C-terminus: NADH-quinone oxidoreductase subunit K (102 aa).

3 helical membrane-spanning segments follow: residues 5–25 (ITHY…GIFL), 31–51 (IIIL…FVAF), and 66–86 (FILT…VVFF).

The protein belongs to the complex I subunit 4L family. NDH-1 is composed of 14 different subunits. Subunits NuoA, H, J, K, L, M, N constitute the membrane sector of the complex.

Its subcellular location is the cell inner membrane. The enzyme catalyses a quinone + NADH + 5 H(+)(in) = a quinol + NAD(+) + 4 H(+)(out). Its function is as follows. NDH-1 shuttles electrons from NADH, via FMN and iron-sulfur (Fe-S) centers, to quinones in the respiratory chain. The immediate electron acceptor for the enzyme in this species is believed to be ubiquinone. Couples the redox reaction to proton translocation (for every two electrons transferred, four hydrogen ions are translocated across the cytoplasmic membrane), and thus conserves the redox energy in a proton gradient. The chain is NADH-quinone oxidoreductase subunit K from Bartonella quintana (strain Toulouse) (Rochalimaea quintana).